The chain runs to 627 residues: Pentatricopeptide repeat-containing protein At2g35030, mitochondrial (627 aa).

The N-terminal 44 residues, 1 to 44 (MQSRALSRLRSYYKRSSVFPSSDNDRSVQLFNLVRSIYSSSSRP), are a transit peptide targeting the mitochondrion. PPR repeat units lie at residues 45-75 (RVPQ…LPER), 76-110 (DVVT…KNVV), 111-138 (TWTA…MPER), 139-173 (NVVS…NIVS), 174-200 (WNSM…MPRR), 201-235 (DVVS…NIIS), 236-262 (WNAM…MPER), 263-293 (DFAS…MPEK), 294-328 (NVIS…GSVK), 330-360 (NVGT…ISKS), 365-396 (NEIV…LVCQ), 398-432 (DLIS…GFKP), 433-467 (SAVT…ESLP), and 469-499 (REEH…DDAR). Residues 504–579 (FYGAILSACN…QPGCSWVKVG (76 aa)) are type E motif. A type E(+) motif region spans residues 580–610 (KQNHLFVVGDKSHPQFEALDSILSDLRNKMR).

Belongs to the PPR family. PCMP-E subfamily.

The protein localises to the mitochondrion. The polypeptide is Pentatricopeptide repeat-containing protein At2g35030, mitochondrial (PCMP-E15) (Arabidopsis thaliana (Mouse-ear cress)).